We begin with the raw amino-acid sequence, 344 residues long: Histone-lysine N-methyltransferase, H3 lysine-9 specific KMT1 (344 aa).

The Pre-SET domain maps to 79–174; the sequence is SGCSCAKDSE…DCPNRVVERG (96 aa). Cys81, Cys83, Cys89, Cys94, Cys96, Cys156, Cys160, Cys162, Cys166, and Cys272 together coordinate Zn(2+). Residues 177–312 enclose the SET domain; the sequence is IPLEIFRTPD…EGEELTFDYV (136 aa). Tyr311 contacts S-adenosyl-L-methionine. The 17-residue stretch at 328-344 folds into the Post-SET domain; that stretch reads HMTRCLCGSKKCRKFLW. Residues Cys332, Cys334, and Cys339 each contribute to the Zn(2+) site.

This sequence belongs to the class V-like SAM-binding methyltransferase superfamily.

It localises to the chromosome. It carries out the reaction L-lysyl(9)-[histone H3] + 3 S-adenosyl-L-methionine = N(6),N(6),N(6)-trimethyl-L-lysyl(9)-[histone H3] + 3 S-adenosyl-L-homocysteine + 3 H(+). In terms of biological role, histone methyltransferase that specifically trimethylates histone H3 to form H3K9me3. H3K9me3 marks chromatin regions for DNA methylation. Plays a key role in the regulation of the biosynthesis of the gamma-pyrones fusapyrone (FPY) and deoxyfusapyrone (dFPY). The protein is Histone-lysine N-methyltransferase, H3 lysine-9 specific KMT1 of Fusarium mangiferae (Mango malformation disease fungus).